The chain runs to 326 residues: NADH-quinone oxidoreductase subunit H (326 aa).

8 helical membrane-spanning segments follow: residues 11–31, 81–101, 114–134, 154–174, 186–206, 237–257, 265–285, and 302–322; these read ILLS…CGAF, VIFT…FAIV, IGIL…LFAG, LSYE…AGSF, LWNV…GVAV, FFVG…TLFF, LPPF…FILI, and WKVC…VILW.

Belongs to the complex I subunit 1 family. In terms of assembly, NDH-1 is composed of 13 different subunits. Subunits NuoA, H, J, K, L, M, N constitute the membrane sector of the complex.

It is found in the cell inner membrane. It catalyses the reaction a quinone + NADH + 5 H(+)(in) = a quinol + NAD(+) + 4 H(+)(out). Functionally, NDH-1 shuttles electrons from NADH, via FMN and iron-sulfur (Fe-S) centers, to quinones in the respiratory chain. The immediate electron acceptor for the enzyme in this species is believed to be ubiquinone. Couples the redox reaction to proton translocation (for every two electrons transferred, four hydrogen ions are translocated across the cytoplasmic membrane), and thus conserves the redox energy in a proton gradient. This subunit may bind ubiquinone. The protein is NADH-quinone oxidoreductase subunit H of Cronobacter sakazakii (strain ATCC BAA-894) (Enterobacter sakazakii).